A 212-amino-acid chain; its full sequence is Large ribosomal subunit protein uL3 (212 aa).

Gln153 carries the post-translational modification N5-methylglutamine.

It belongs to the universal ribosomal protein uL3 family. In terms of assembly, part of the 50S ribosomal subunit. Forms a cluster with proteins L14 and L19. Post-translationally, methylated by PrmB.

One of the primary rRNA binding proteins, it binds directly near the 3'-end of the 23S rRNA, where it nucleates assembly of the 50S subunit. The chain is Large ribosomal subunit protein uL3 from Idiomarina loihiensis (strain ATCC BAA-735 / DSM 15497 / L2-TR).